The sequence spans 612 residues: Cyclin-dependent kinase 8 (612 aa).

The Protein kinase domain occupies Phe-23 to Phe-345. ATP-binding positions include Ile-29–Val-37 and Lys-57. Asp-155 serves as the catalytic Proton acceptor. 5 stretches are compositionally biased toward low complexity: residues Gln-403–Pro-455, His-472–His-483, Pro-543–Pro-555, Gln-564–Met-573, and Asn-600–Arg-612. 2 disordered regions span residues Gln-403 to His-483 and Pro-543 to Arg-612.

This sequence belongs to the protein kinase superfamily. CMGC Ser/Thr protein kinase family. CDC2/CDKX subfamily. As to quaternary structure, component of the Mediator complex. Requires Mg(2+) as cofactor.

It is found in the nucleus. The enzyme catalyses L-seryl-[protein] + ATP = O-phospho-L-seryl-[protein] + ADP + H(+). It catalyses the reaction L-threonyl-[protein] + ATP = O-phospho-L-threonyl-[protein] + ADP + H(+). The catalysed reaction is [DNA-directed RNA polymerase] + ATP = phospho-[DNA-directed RNA polymerase] + ADP + H(+). Its function is as follows. Component of the Mediator complex, a coactivator involved in regulated gene transcription of nearly all RNA polymerase II-dependent genes. Mediator functions as a bridge to convey information from gene-specific regulatory proteins to the basal RNA polymerase II transcription machinery. Mediator is recruited to promoters by direct interactions with regulatory proteins and serves as a scaffold for the assembly of a functional pre-initiation complex with RNA polymerase II and the general transcription factors. Phosphorylates the CTD (C-terminal domain) of the large subunit of RNA polymerase II (RNAp II), which may inhibit the formation of a transcription initiation complex. This Caenorhabditis briggsae protein is Cyclin-dependent kinase 8 (cdk-8).